The chain runs to 487 residues: Glutamate--tRNA ligase (487 aa).

A 'HIGH' region motif is present at residues 11–21; sequence PSPTGYPHLGN. Positions 108, 110, 135, and 137 each coordinate Zn(2+). The 'KMSKS' region signature appears at 245 to 249; the sequence is KLSKR. Residue Lys248 coordinates ATP.

Belongs to the class-I aminoacyl-tRNA synthetase family. Glutamate--tRNA ligase type 1 subfamily. As to quaternary structure, monomer. Requires Zn(2+) as cofactor.

The protein localises to the cytoplasm. The enzyme catalyses tRNA(Glu) + L-glutamate + ATP = L-glutamyl-tRNA(Glu) + AMP + diphosphate. Catalyzes the attachment of glutamate to tRNA(Glu) in a two-step reaction: glutamate is first activated by ATP to form Glu-AMP and then transferred to the acceptor end of tRNA(Glu). The chain is Glutamate--tRNA ligase from Dehalococcoides mccartyi (strain CBDB1).